A 158-amino-acid chain; its full sequence is Ribonuclease H (158 aa).

Residues 1–142 (MRKQVEIFTD…CDELARAAAM (142 aa)) form the RNase H type-1 domain. Residues Asp10, Glu48, Asp70, and Asp134 each coordinate Mg(2+).

Belongs to the RNase H family. Monomer. Mg(2+) is required as a cofactor.

It is found in the cytoplasm. The catalysed reaction is Endonucleolytic cleavage to 5'-phosphomonoester.. Functionally, endonuclease that specifically degrades the RNA of RNA-DNA hybrids. This chain is Ribonuclease H, found in Cronobacter sakazakii (strain ATCC BAA-894) (Enterobacter sakazakii).